The sequence spans 256 residues: Phosphoribosylaminoimidazole-succinocarboxamide synthase (256 aa).

The protein belongs to the SAICAR synthetase family.

It catalyses the reaction 5-amino-1-(5-phospho-D-ribosyl)imidazole-4-carboxylate + L-aspartate + ATP = (2S)-2-[5-amino-1-(5-phospho-beta-D-ribosyl)imidazole-4-carboxamido]succinate + ADP + phosphate + 2 H(+). Its pathway is purine metabolism; IMP biosynthesis via de novo pathway; 5-amino-1-(5-phospho-D-ribosyl)imidazole-4-carboxamide from 5-amino-1-(5-phospho-D-ribosyl)imidazole-4-carboxylate: step 1/2. This Synechococcus sp. (strain JA-3-3Ab) (Cyanobacteria bacterium Yellowstone A-Prime) protein is Phosphoribosylaminoimidazole-succinocarboxamide synthase.